Here is a 496-residue protein sequence, read N- to C-terminus: tRNA-2-methylthio-N(6)-dimethylallyladenosine synthase (496 aa).

Residues 43-160 form the MTTase N-terminal domain; the sequence is KKVFVTTQGC…LPELYDQSHQ (118 aa). Cys-52, Cys-89, Cys-123, Cys-204, Cys-208, and Cys-211 together coordinate [4Fe-4S] cluster. Residues 190–422 enclose the Radical SAM core domain; sequence RVEGFKAFVS…QKVIIDSTLA (233 aa). Residues 425-493 enclose the TRAM domain; that stretch reads HEMVGTTTRV…PHMVKGEIEA (69 aa).

The protein belongs to the methylthiotransferase family. MiaB subfamily. In terms of assembly, monomer. [4Fe-4S] cluster is required as a cofactor.

It localises to the cytoplasm. The enzyme catalyses N(6)-dimethylallyladenosine(37) in tRNA + (sulfur carrier)-SH + AH2 + 2 S-adenosyl-L-methionine = 2-methylsulfanyl-N(6)-dimethylallyladenosine(37) in tRNA + (sulfur carrier)-H + 5'-deoxyadenosine + L-methionine + A + S-adenosyl-L-homocysteine + 2 H(+). Its function is as follows. Catalyzes the methylthiolation of N6-(dimethylallyl)adenosine (i(6)A), leading to the formation of 2-methylthio-N6-(dimethylallyl)adenosine (ms(2)i(6)A) at position 37 in tRNAs that read codons beginning with uridine. The sequence is that of tRNA-2-methylthio-N(6)-dimethylallyladenosine synthase from Psychrobacter arcticus (strain DSM 17307 / VKM B-2377 / 273-4).